The primary structure comprises 334 residues: Anthranilate phosphoribosyltransferase (334 aa).

5-phospho-alpha-D-ribose 1-diphosphate contacts are provided by residues Gly-81, 84–85 (GD), Thr-89, 91–94 (NIST), 109–117 (KHGSRSVSS), and Ala-121. Gly-81 contacts anthranilate. Ser-93 lines the Mg(2+) pocket. Arg-167 is an anthranilate binding site. The Mg(2+) site is built by Asp-225 and Glu-226.

It belongs to the anthranilate phosphoribosyltransferase family. As to quaternary structure, homodimer. The cofactor is Mg(2+).

It carries out the reaction N-(5-phospho-beta-D-ribosyl)anthranilate + diphosphate = 5-phospho-alpha-D-ribose 1-diphosphate + anthranilate. The protein operates within amino-acid biosynthesis; L-tryptophan biosynthesis; L-tryptophan from chorismate: step 2/5. In terms of biological role, catalyzes the transfer of the phosphoribosyl group of 5-phosphorylribose-1-pyrophosphate (PRPP) to anthranilate to yield N-(5'-phosphoribosyl)-anthranilate (PRA). The polypeptide is Anthranilate phosphoribosyltransferase (Actinobacillus pleuropneumoniae serotype 7 (strain AP76)).